The sequence spans 191 residues: UPF0149 protein VS_2635 (191 aa).

It belongs to the UPF0149 family.

This Vibrio atlanticus (strain LGP32) (Vibrio splendidus (strain Mel32)) protein is UPF0149 protein VS_2635.